Reading from the N-terminus, the 331-residue chain is Olfactory receptor 6B3 (331 aa).

At 1 to 25 (MSGENVTRVGTFILVGFPTAPGLQY) the chain is on the extracellular side. Asparagine 5 carries an N-linked (GlcNAc...) asparagine glycan. Residues 26-46 (LLFLLFLLTYLFVLVENLAII) form a helical membrane-spanning segment. Over 47–54 (LTVWSSTS) the chain is Cytoplasmic. A helical transmembrane segment spans residues 55 to 75 (LHRPMYYFLSSMSFLEIWYVS). At 76-99 (DITPKMLEGFLLQQKRISFVGCMT) the chain is on the extracellular side. Cysteine 97 and cysteine 189 are disulfide-bonded. Residues 100-120 (QLYFFSSLVCTECVLLASMAY) traverse the membrane as a helical segment. At 121–139 (DRYVAICHPLRYHVLVTPG) the chain is on the cytoplasmic side. The helical transmembrane segment at 140–160 (LCLQLVGFSFVSGFTISMIKV) threads the bilayer. Topologically, residues 161–196 (CFISSVTFCGSNVLNHFFCDISPILKLACTDFSTAE) are extracellular. Residues 197–217 (LVDFILAFIILVFPLLATMLS) traverse the membrane as a helical segment. Residues 218-237 (YAHITLAVLRIPSATGCWRA) are Cytoplasmic-facing. A helical membrane pass occupies residues 238 to 258 (FFTCASHLTVVTVFYTALLFM). Topologically, residues 259 to 271 (YVRPQAIDSRSSN) are extracellular. A helical transmembrane segment spans residues 272–292 (KLISVLYTVITPILNPLIYCL). At 293–331 (RNKEFKNALKKAFGLTSCAVEGRLSSLLELHLQIHSQPL) the chain is on the cytoplasmic side.

This sequence belongs to the G-protein coupled receptor 1 family.

The protein localises to the cell membrane. Odorant receptor. The polypeptide is Olfactory receptor 6B3 (OR6B3) (Homo sapiens (Human)).